A 164-amino-acid polypeptide reads, in one-letter code: Peptidyl-prolyl cis-trans isomerase A-like 4A (164 aa).

Residues Phe-7–Gln-163 form the PPIase cyclophilin-type domain.

The protein belongs to the cyclophilin-type PPIase family. PPIase A subfamily. As to expression, highly expressed in brain, ovary and mammary gland. Moderately expressed in lung, salivary gland, kidney, skin, adipose tissue, intestine and spleen. Weakly expressed in skeletal muscle, liver and stomach. Expressed in pleiomorphic and undifferentiated liposarcomas, osteosarcomas and breast carcinomas.

Its subcellular location is the cytoplasm. The enzyme catalyses [protein]-peptidylproline (omega=180) = [protein]-peptidylproline (omega=0). PPIases accelerate the folding of proteins. It catalyzes the cis-trans isomerization of proline imidic peptide bonds in oligopeptides. This is Peptidyl-prolyl cis-trans isomerase A-like 4A from Homo sapiens (Human).